A 327-amino-acid polypeptide reads, in one-letter code: Glycerol-3-phosphate dehydrogenase [NAD(P)+] (327 aa).

NADPH contacts are provided by Trp-11, Arg-30, and Lys-103. Positions 103, 131, and 133 each coordinate sn-glycerol 3-phosphate. NADPH is bound at residue Ala-135. Sn-glycerol 3-phosphate is bound by residues Lys-186, Asp-243, Ser-253, Arg-254, and Asn-255. Catalysis depends on Lys-186, which acts as the Proton acceptor. Arg-254 provides a ligand contact to NADPH. Val-281 and Glu-283 together coordinate NADPH.

The protein belongs to the NAD-dependent glycerol-3-phosphate dehydrogenase family.

The protein resides in the cytoplasm. The enzyme catalyses sn-glycerol 3-phosphate + NAD(+) = dihydroxyacetone phosphate + NADH + H(+). It carries out the reaction sn-glycerol 3-phosphate + NADP(+) = dihydroxyacetone phosphate + NADPH + H(+). The protein operates within membrane lipid metabolism; glycerophospholipid metabolism. Functionally, catalyzes the reduction of the glycolytic intermediate dihydroxyacetone phosphate (DHAP) to sn-glycerol 3-phosphate (G3P), the key precursor for phospholipid synthesis. This Wolbachia sp. subsp. Drosophila simulans (strain wRi) protein is Glycerol-3-phosphate dehydrogenase [NAD(P)+].